We begin with the raw amino-acid sequence, 501 residues long: Arabinose import ATP-binding protein AraG (501 aa).

ABC transporter domains are found at residues Leu4–Arg239 and Leu252–Lys495. Gly36 to Ser43 contributes to the ATP binding site.

Belongs to the ABC transporter superfamily. Arabinose importer (TC 3.A.1.2.2) family. In terms of assembly, the complex is composed of two ATP-binding proteins (AraG), two transmembrane proteins (AraH) and a solute-binding protein (AraF).

It is found in the cell inner membrane. The catalysed reaction is L-arabinose(out) + ATP + H2O = L-arabinose(in) + ADP + phosphate + H(+). Functionally, part of the ABC transporter complex AraFGH involved in arabinose import. Responsible for energy coupling to the transport system. This chain is Arabinose import ATP-binding protein AraG, found in Rhizobium etli (strain ATCC 51251 / DSM 11541 / JCM 21823 / NBRC 15573 / CFN 42).